The primary structure comprises 416 residues: Cyclin-L1-1 (416 aa).

A disordered region spans residues 286 to 416 (KCTAGSANND…DSSKDRRRHH (131 aa)). Basic and acidic residues-rich tracts occupy residues 304 to 315 (PHEKATDSKKSG), 328 to 374 (SYER…DKLK), 384 to 393 (RLKDSGGHSD), and 401 to 410 (RDRDYRDSSK).

This sequence belongs to the cyclin family. Cyclin L subfamily. As to quaternary structure, forms a complex with CDKG1. Interacts with MOS4 and associates with the spliceosome.

It localises to the nucleus. In terms of biological role, cognate cyclin for CDKG1. Required for synapsis and male meiosis, and for the proper splicing of specific resistance (R) genes. Involved in regulation of DNA methylation and transcriptional silencing. The protein is Cyclin-L1-1 (CYCL1-1) of Arabidopsis thaliana (Mouse-ear cress).